A 427-amino-acid chain; its full sequence is Sensor histidine kinase ArsS (427 aa).

Transmembrane regions (helical) follow at residues 3-23 (FSIFFKVVALFMITLFSFGAF) and 131-151 (NYFLAITVGLLLILFLFLFVL). The region spanning 151 to 203 (LQSLLPLRELRSQVKPFAQGDKSVSCKSKQKDEIGDLANEFDNCILKINAMNE) is the HAMP domain. The Histidine kinase domain occupies 211-398 (SIMHELRTPI…LSYHYSNGRI (188 aa)). Phosphohistidine; by autocatalysis is present on histidine 214.

Autophosphorylated.

The protein localises to the membrane. It catalyses the reaction ATP + protein L-histidine = ADP + protein N-phospho-L-histidine.. In terms of biological role, member of the two-component regulatory system ArsS/ArsR that regulates genes involved in biofilm formation and acid adaptation by acting on major ammonia-producing pathways. Functions as a sensor protein kinase which is autophosphorylated at a histidine residue and transfers its phosphate group to the conserved aspartic acid residue in the regulatory domain of ArsR. In turn, ArsR binds to the upstream promoter regions of target genes including ureA, amiE and amiF to positively regulate their expression in response to acidic pH. Also participates in acidic acclimatation in a phosphorylation-independent pathway by regulating acid-induced trafficking of urease and its accessory proteins to the inner membrane. The chain is Sensor histidine kinase ArsS from Helicobacter pylori (strain ATCC 700392 / 26695) (Campylobacter pylori).